Here is a 433-residue protein sequence, read N- to C-terminus: uncharacterized protein (433 aa).

A Radical SAM core domain is found at 104–349 (ERGRNIIQVR…ELEYKKKGIE (246 aa)). The [4Fe-4S] cluster site is built by Cys118, Cys122, and Cys125. Residues 171–172 (GE) and 236–238 (MLS) contribute to the S-adenosyl-L-methionine site. The region spanning 370 to 433 (PFKVGEVTKV…KDNIIVAELV (64 aa)) is the TRAM domain.

Belongs to the radical SAM superfamily. [4Fe-4S] cluster serves as cofactor.

This is an uncharacterized protein from Methanocaldococcus jannaschii (strain ATCC 43067 / DSM 2661 / JAL-1 / JCM 10045 / NBRC 100440) (Methanococcus jannaschii).